A 208-amino-acid polypeptide reads, in one-letter code: NAD(P)H-quinone oxidoreductase subunit I (208 aa).

4Fe-4S ferredoxin-type domains are found at residues 55-84 (GRIH…VDWV) and 95-124 (RNYS…MTEE). Positions 64, 67, 70, 74, 104, 107, 110, and 114 each coordinate [4Fe-4S] cluster.

Belongs to the complex I 23 kDa subunit family. As to quaternary structure, NDH-1 is composed of at least 11 different subunits. The cofactor is [4Fe-4S] cluster.

It is found in the cellular thylakoid membrane. The enzyme catalyses a plastoquinone + NADH + (n+1) H(+)(in) = a plastoquinol + NAD(+) + n H(+)(out). It catalyses the reaction a plastoquinone + NADPH + (n+1) H(+)(in) = a plastoquinol + NADP(+) + n H(+)(out). In terms of biological role, NDH-1 shuttles electrons from an unknown electron donor, via FMN and iron-sulfur (Fe-S) centers, to quinones in the respiratory and/or the photosynthetic chain. The immediate electron acceptor for the enzyme in this species is believed to be plastoquinone. Couples the redox reaction to proton translocation, and thus conserves the redox energy in a proton gradient. The polypeptide is NAD(P)H-quinone oxidoreductase subunit I (Prochlorococcus marinus (strain MIT 9301)).